We begin with the raw amino-acid sequence, 619 residues long: Kininogen-2 (619 aa).

The first 18 residues, 1 to 18 (MKLITILFLCSRLLPSLT), serve as a signal peptide directing secretion. Q19 carries the pyrrolidone carboxylic acid modification. Residues 27–131 (CNDQDVFKAV…IQTCLITPAE (105 aa)) enclose the Cystatin kininogen-type 1 domain. 9 disulfide bridges follow: C27/C589, C82/C93, C106/C125, C141/C144, C205/C217, C228/C247, C261/C264, C325/C337, and C348/C367. An N-linked (GlcNAc...) asparagine glycan is attached at N87. T136 is a glycosylation site (O-linked (GalNAc...) threonine; partial). The 104-residue stretch at 150-253 (TKSPDLEPVL…SQKCDLYPGE (104 aa)) folds into the Cystatin kininogen-type 2 domain. N-linked (GlcNAc...) asparagine glycans are attached at residues N168 and N169. A glycan (N-linked (GlcNAc...) asparagine; partial) is linked at N197. A glycan (N-linked (GlcNAc...) asparagine) is linked at N204. The Cystatin kininogen-type 3 domain maps to 270 to 373 (VDSPDLEEAL…TVNCQPLGQT (104 aa)). N-linked (GlcNAc...) asparagine glycosylation is present at N280. 4-hydroxyproline is present on P380. Residues 394–495 (EGSTTVSLPH…GKNNGKHYDW (102 aa)) form a disordered region. O-linked (GalNAc...) serine glycosylation is present at S396. T397 and T398 each carry an O-linked (GalNAc...) threonine glycan. S400 and S404 each carry an O-linked (GalNAc...) serine glycan. Residues 442–490 (GHKHKHDQGHGHHRSHGLGHGHQKQHGLGHGHKHGHGHGKHKNKGKNNG) are compositionally biased toward basic residues. S510 carries O-linked (GalNAc...) serine glycosylation. 6 O-linked (GalNAc...) threonine glycosylation sites follow: T518, T522, T534, T546, T551, and T568.

Post-translationally, bradykinin is released from kininogen by plasma kallikrein. As to expression, plasma.

The protein resides in the secreted. It localises to the extracellular space. Its function is as follows. (1) Kininogens are inhibitors of thiol proteases; (2) HMW-kininogen plays an important role in blood coagulation by helping to position optimally prekallikrein and factor XI next to factor XII; (3) HMW-kininogen inhibits the thrombin- and plasmin-induced aggregation of thrombocytes; (4) the active peptide bradykinin that is released from HMW-kininogen shows a variety of physiological effects: (4A) influence in smooth muscle contraction, (4B) induction of hypotension, (4C) natriuresis and diuresis, (4D) decrease in blood glucose level, (4E) it is a mediator of inflammation and causes (4E1) increase in vascular permeability, (4E2) stimulation of nociceptors (4E3) release of other mediators of inflammation (e.g. prostaglandins), (4F) it has a cardioprotective effect (directly via bradykinin action, indirectly via endothelium-derived relaxing factor action); (5) LMW-kininogen inhibits the aggregation of thrombocytes; (6) LMW-kininogen is in contrast to HMW-kininogen not involved in blood clotting. The chain is Kininogen-2 (KNG2) from Bos taurus (Bovine).